The sequence spans 496 residues: Cytochrome P450 71D95 (496 aa).

Residues 2–22 (ELQISSAIIILVATFVASLLI) form a helical; Signal-anchor membrane-spanning segment. C436 lines the heme pocket.

It belongs to the cytochrome P450 family. The cofactor is heme.

The protein localises to the endoplasmic reticulum membrane. It catalyses the reaction (4S)-limonene + reduced [NADPH--hemoprotein reductase] + O2 = (1S,6R)-isopiperitenol + oxidized [NADPH--hemoprotein reductase] + H2O + H(+). In terms of biological role, hydroxylates both (+)- and (-)-limonene to (+) and (-)-trans-isopiperitenol. The polypeptide is Cytochrome P450 71D95 (CYP71D95) (Mentha spicata (Spearmint)).